Reading from the N-terminus, the 307-residue chain is Transmembrane protein 200B (307 aa).

Residues 1–38 (MTAGSPEECGEVRRSPEGRVSRLGRRLGRRRRPRSPPE) are disordered. Basic and acidic residues predominate over residues 10–20 (GEVRRSPEGRV). Residues 22–34 (RLGRRLGRRRRPR) show a composition bias toward basic residues. Residues 53-73 (GAFAALGALVVLVGMGIAVAG) traverse the membrane as a helical segment. Positions 81–111 (APGSRAANASSPQMSELRREGRGGGRAHGPH) are disordered. Asn88 carries an N-linked (GlcNAc...) asparagine glycan. Residues 96-111 (ELRREGRGGGRAHGPH) are compositionally biased toward basic and acidic residues. Residues 116 to 136 (LLGPVIMGVGLFVFICANTLL) form a helical membrane-spanning segment. Residues 180–211 (AVGCAEPEIWDPSPRRGTSPVPSVRSLRSEPA) form a disordered region.

The protein belongs to the TMEM200 family.

It localises to the membrane. The polypeptide is Transmembrane protein 200B (TMEM200B) (Homo sapiens (Human)).